Consider the following 283-residue polypeptide: Trafficking protein particle complex subunit 31 (283 aa).

Residues 1-16 (MSQRIIQPSASDQQFP) show a composition bias toward polar residues. 2 disordered regions span residues 1-20 (MSQR…GKSD) and 126-156 (SSKL…RLQE). Positions 126–151 (SSKLSNASNSPGMLANSSTATSASAN) are enriched in low complexity.

This sequence belongs to the TRAPP small subunits family. BET3 subfamily. As to quaternary structure, part of the multisubunit TRAPP (transport protein particle) I complex composed of BET3, BET5, TRS20, TRS23, TRS31 and TRS33. Part of the multisubunit TRAPP (transport protein particle) II complex composed of BET3, BET5, TRS20, TRS23, TRS31, TRS33, TRS65, TRS85, TRS120 and TRS130. Part of the multisubunit TRAPP (transport protein particle) III complex composed of BET3, BET5, TRS20, TRS23, TRS31, TRS33 and TRS85.

It localises to the golgi apparatus. Its subcellular location is the cis-Golgi network. The protein resides in the endoplasmic reticulum. The protein localises to the preautophagosomal structure. Component of the TRAPP I, TRAPP II and TRAPP III complexes which act as guanine nucleotide exchange factors (GEF) for YPT1. TRAPP I plays a key role in the late stages of endoplasmic reticulum to Golgi traffic. TRAPP II plays a role in intra-Golgi transport. TRAPP III plays a role in autophagosome formation. The chain is Trafficking protein particle complex subunit 31 (TRS31) from Saccharomyces cerevisiae (strain ATCC 204508 / S288c) (Baker's yeast).